A 429-amino-acid polypeptide reads, in one-letter code: Histidine--tRNA ligase (429 aa).

Belongs to the class-II aminoacyl-tRNA synthetase family. As to quaternary structure, homodimer.

It is found in the cytoplasm. The enzyme catalyses tRNA(His) + L-histidine + ATP = L-histidyl-tRNA(His) + AMP + diphosphate + H(+). The polypeptide is Histidine--tRNA ligase (Desulfotalea psychrophila (strain LSv54 / DSM 12343)).